Reading from the N-terminus, the 294-residue chain is uncharacterized protein (294 aa).

Disordered regions lie at residues 1–148 (MFLR…LEKP) and 268–294 (DEAA…GKGL). 2 positions are modified to phosphoserine: S34 and S35. Residues 35–44 (SSENSGSDWD) are compositionally biased toward low complexity. The span at 52-62 (DVGHPKTKDSG) shows a compositional bias: basic and acidic residues. A phosphoserine mark is found at S71 and S90. Basic and acidic residues-rich tracts occupy residues 73-92 (PSKE…DSLK) and 278-294 (GLER…GKGL).

This is an uncharacterized protein from Homo sapiens (Human).